The chain runs to 102 residues: Small ribosomal subunit protein uS10 (102 aa).

Belongs to the universal ribosomal protein uS10 family. As to quaternary structure, part of the 30S ribosomal subunit.

Its function is as follows. Involved in the binding of tRNA to the ribosomes. In Streptococcus uberis (strain ATCC BAA-854 / 0140J), this protein is Small ribosomal subunit protein uS10.